The following is a 579-amino-acid chain: Potassium-transporting ATPase potassium-binding subunit (579 aa).

Helical transmembrane passes span 2 to 22, 66 to 86, 135 to 155, 177 to 197, 260 to 280, 292 to 312, 391 to 411, 437 to 457, 490 to 510, and 546 to 566; these read MNLV…AIPL, SFSV…LHIF, GLTV…FALI, VLYI…SQGV, TILS…ALCF, GIAI…IVGV, VFGG…LAVF, VLVC…ASIL, FAGF…SMIF, and FIGL…FPAL.

Belongs to the KdpA family. In terms of assembly, the system is composed of three essential subunits: KdpA, KdpB and KdpC.

It localises to the cell membrane. Part of the high-affinity ATP-driven potassium transport (or Kdp) system, which catalyzes the hydrolysis of ATP coupled with the electrogenic transport of potassium into the cytoplasm. This subunit binds the extracellular potassium ions and delivers the ions to the membrane domain of KdpB through an intramembrane tunnel. The sequence is that of Potassium-transporting ATPase potassium-binding subunit from Clostridium botulinum (strain Eklund 17B / Type B).